The chain runs to 374 residues: Queuine tRNA-ribosyltransferase (374 aa).

The active-site Proton acceptor is Asp-89. Substrate contacts are provided by residues 89–93 (DSGGF), Asp-143, Gln-187, and Gly-214. Residues 245–251 (GVGKPED) are RNA binding. The active-site Nucleophile is Asp-264. The tract at residues 269–273 (TRNAR) is RNA binding; important for wobble base 34 recognition. Cys-302, Cys-304, Cys-307, and His-333 together coordinate Zn(2+).

It belongs to the queuine tRNA-ribosyltransferase family. In terms of assembly, homodimer. Within each dimer, one monomer is responsible for RNA recognition and catalysis, while the other monomer binds to the replacement base PreQ1. Zn(2+) serves as cofactor.

The catalysed reaction is 7-aminomethyl-7-carbaguanine + guanosine(34) in tRNA = 7-aminomethyl-7-carbaguanosine(34) in tRNA + guanine. It participates in tRNA modification; tRNA-queuosine biosynthesis. Functionally, catalyzes the base-exchange of a guanine (G) residue with the queuine precursor 7-aminomethyl-7-deazaguanine (PreQ1) at position 34 (anticodon wobble position) in tRNAs with GU(N) anticodons (tRNA-Asp, -Asn, -His and -Tyr). Catalysis occurs through a double-displacement mechanism. The nucleophile active site attacks the C1' of nucleotide 34 to detach the guanine base from the RNA, forming a covalent enzyme-RNA intermediate. The proton acceptor active site deprotonates the incoming PreQ1, allowing a nucleophilic attack on the C1' of the ribose to form the product. After dissociation, two additional enzymatic reactions on the tRNA convert PreQ1 to queuine (Q), resulting in the hypermodified nucleoside queuosine (7-(((4,5-cis-dihydroxy-2-cyclopenten-1-yl)amino)methyl)-7-deazaguanosine). The chain is Queuine tRNA-ribosyltransferase from Yersinia pseudotuberculosis serotype O:1b (strain IP 31758).